The primary structure comprises 274 residues: Proteasome subunit beta type-5-A (274 aa).

The propeptide at 1 to 57 is removed in mature form; that stretch reads MKLDTSGFETSMPMIGFGSSSDMLDELSSVPSFDLPRTKEFDGFQKKAKDMLKHAKG. Thr-58 serves as the catalytic Nucleophile.

Belongs to the peptidase T1B family. Component of the 20S core complex of the 26S proteasome. The 26S proteasome is composed of a core protease (CP), known as the 20S proteasome, capped at one or both ends by the 19S regulatory particle (RP/PA700). The 20S proteasome core is composed of 28 subunits that are arranged in four stacked rings, resulting in a barrel-shaped structure. The two end rings are each formed by seven alpha subunits, and the two central rings are each formed by seven beta subunits. The catalytic chamber with the active sites is on the inside of the barrel. As to expression, ubiquitous low levels, higher expression in siliques and flowers.

Its subcellular location is the cytoplasm. It localises to the nucleus. It carries out the reaction Cleavage of peptide bonds with very broad specificity.. In terms of biological role, the proteasome is a multicatalytic proteinase complex which is characterized by its ability to cleave peptides with Arg, Phe, Tyr, Leu, and Glu adjacent to the leaving group at neutral or slightly basic pH. The proteasome has an ATP-dependent proteolytic activity. The chain is Proteasome subunit beta type-5-A (PBE1) from Arabidopsis thaliana (Mouse-ear cress).